Consider the following 465-residue polypeptide: ATP-dependent RNA helicase ddx19 (465 aa).

Residues 1-20 (MSEKETNTTSTENKEKEKQE) show a composition bias toward basic and acidic residues. The tract at residues 1–45 (MSEKETNTTSTENKEKEKQEQTNTNSTTESTNNQVDEEYERPGRS) is disordered. Low complexity predominate over residues 21–34 (QTNTNSTTESTNNQ). Residues 70–98 (KTFEELGLKPELLKGVYAMGYNKPSKIQE) carry the Q motif motif. The Helicase ATP-binding domain maps to 102 to 268 (PIIIQSPNNL…KKIVQDPYTS (167 aa)). 115 to 122 (SQSGTGKT) contributes to the ATP binding site. The DEAD box motif lies at 215–218 (DEAD). A Helicase C-terminal domain is found at 297–449 (ILSDIYGFIS…ELKSSEIESL (153 aa)).

It belongs to the DEAD box helicase family. DDX19/DBP5 subfamily.

It catalyses the reaction ATP + H2O = ADP + phosphate + H(+). Its function is as follows. ATP-binding RNA helicase required for normal differentiation and development. The sequence is that of ATP-dependent RNA helicase ddx19 (helC) from Dictyostelium discoideum (Social amoeba).